Consider the following 272-residue polypeptide: Shikimate dehydrogenase (NADP(+)) (272 aa).

Shikimate is bound by residues 14-16 (SKS) and T61. The Proton acceptor role is filled by K65. E77 is an NADP(+) binding site. The shikimate site is built by N86 and D102. Residues 126-130 (GAGGA), 149-154 (NRTYSR), and M213 each bind NADP(+). Y215 is a binding site for shikimate. NADP(+) is bound at residue G237.

Belongs to the shikimate dehydrogenase family. As to quaternary structure, homodimer.

The enzyme catalyses shikimate + NADP(+) = 3-dehydroshikimate + NADPH + H(+). It participates in metabolic intermediate biosynthesis; chorismate biosynthesis; chorismate from D-erythrose 4-phosphate and phosphoenolpyruvate: step 4/7. Involved in the biosynthesis of the chorismate, which leads to the biosynthesis of aromatic amino acids. Catalyzes the reversible NADPH linked reduction of 3-dehydroshikimate (DHSA) to yield shikimate (SA). The chain is Shikimate dehydrogenase (NADP(+)) from Enterobacter sp. (strain 638).